The chain runs to 421 residues: Histidine--tRNA ligase (421 aa).

It belongs to the class-II aminoacyl-tRNA synthetase family. In terms of assembly, homodimer.

The protein localises to the cytoplasm. The enzyme catalyses tRNA(His) + L-histidine + ATP = L-histidyl-tRNA(His) + AMP + diphosphate + H(+). This chain is Histidine--tRNA ligase, found in Francisella tularensis subsp. tularensis (strain SCHU S4 / Schu 4).